We begin with the raw amino-acid sequence, 522 residues long: Exo-alpha-(1-&gt;6)-L-arabinofuranosidase (522 aa).

3 residues coordinate alpha-L-arabinofuranose: glutamate 39, asparagine 84, and asparagine 185. Glutamate 186 acts as the Proton donor/acceptor in catalysis. Residues tyrosine 257, glutamate 310, and glutamine 370 each coordinate alpha-L-arabinofuranose. The active-site Nucleophile is glutamate 310.

The protein belongs to the glycosyl hydrolase 51 family. In terms of assembly, homohexamer; trimer of dimers.

It carries out the reaction Hydrolysis of terminal non-reducing alpha-L-arabinofuranoside residues in alpha-L-arabinosides.. The catalysed reaction is (20S)-ginsenoside Rc + H2O = L-arabinofuranose + (20S)-ginsenoside Rd. Completely inhibited by Cu(2+) and partially inhibited by Co(2+) and Ba(2+). Its function is as follows. Catalyzes the hydrolysis of p-nitrophenyl-alpha-L-arabinofuranoside (pNP-alphaL-Af) and the hydrolysis of the terminal alpha-L-arabinofuranoside at the C20 position of ginsenoside Rc to produce ginsenoside Rd. Cannot hydrolyze p-nitrophenyl-alpha-L-arabinopyranoside (pNP-alphaL-Ap) and ginsenoside Rb2. The chain is Exo-alpha-(1-&gt;6)-L-arabinofuranosidase from Bifidobacterium longum.